We begin with the raw amino-acid sequence, 820 residues long: LPS-assembly protein LptD (820 aa).

The tract at residues 1-27 is disordered; that stretch reads MDLSSLPDPLRPTHSRLPARRRDRAEP. Basic residues predominate over residues 13–22; sequence THSRLPARRR.

The protein belongs to the LptD family. Component of the lipopolysaccharide transport and assembly complex. Interacts with LptE and LptA.

Its function is as follows. Together with LptE, is involved in the assembly of lipopolysaccharide (LPS) at the surface of the outer membrane. The chain is LPS-assembly protein LptD from Paracidovorax citrulli (strain AAC00-1) (Acidovorax citrulli).